Here is a 494-residue protein sequence, read N- to C-terminus: Probable cytosol aminopeptidase (494 aa).

Residues K260 and D265 each contribute to the Mn(2+) site. K272 is a catalytic residue. Positions 283, 342, and 344 each coordinate Mn(2+). R346 is an active-site residue.

The protein belongs to the peptidase M17 family. It depends on Mn(2+) as a cofactor.

It is found in the cytoplasm. The catalysed reaction is Release of an N-terminal amino acid, Xaa-|-Yaa-, in which Xaa is preferably Leu, but may be other amino acids including Pro although not Arg or Lys, and Yaa may be Pro. Amino acid amides and methyl esters are also readily hydrolyzed, but rates on arylamides are exceedingly low.. It catalyses the reaction Release of an N-terminal amino acid, preferentially leucine, but not glutamic or aspartic acids.. Functionally, presumably involved in the processing and regular turnover of intracellular proteins. Catalyzes the removal of unsubstituted N-terminal amino acids from various peptides. This Bacillus cereus (strain ZK / E33L) protein is Probable cytosol aminopeptidase.